The chain runs to 196 residues: ECF RNA polymerase sigma factor SigM (196 aa).

The segment at 39–105 (LFRRHHRQLH…ACLDRLRRAK (67 aa)) is sigma-70 factor domain-2. The short motif at 63-66 (DALQ) is the Polymerase core binding element. The segment at 130–181 (AVQRALMRLPVEQRAAVVAVDMQGYSIADTARMLGVAEGTVKSRCARARARL) is sigma-70 factor domain-4. The H-T-H motif DNA-binding region spans 156–175 (IADTARMLGVAEGTVKSRCA).

The protein belongs to the sigma-70 factor family. ECF subfamily. Interacts transiently with the RNA polymerase catalytic core formed by RpoA, RpoB, RpoC and RpoZ (2 alpha, 1 beta, 1 beta' and 1 omega subunit) to form the RNA polymerase holoenzyme that can initiate transcription. Interacts (via sigma-70 factor domain-4) with anti-sigma-M factor RsmA (AC L7N5D7).

In terms of biological role, sigma factors are initiation factors that promote the attachment of RNA polymerase to specific initiation sites and are then released. Extracytoplasmic function (ECF) sigma factors are held in an inactive form by an anti-sigma factor (RsaM, AC L7N5D7) until released by regulated intramembrane proteolysis. This sigma factor is required for the synthesis of surface or secreted molecules. This is ECF RNA polymerase sigma factor SigM (sigM) from Mycobacterium tuberculosis (strain ATCC 25618 / H37Rv).